Consider the following 929-residue polypeptide: Lon protease homolog 2, peroxisomal (929 aa).

The 247-residue stretch at 11-257 (LPLVPLPKGS…RVVEILTRQL (247 aa)) folds into the Lon N-terminal domain. A disordered region spans residues 302–325 (GLTPPGLSAGRNNDNDDKESNEVD). 484–491 (GPPGVGKT) provides a ligand contact to ATP. The 188-residue stretch at 727-914 (HGRPGVVTGL…WEAIRQVWPD (188 aa)) folds into the Lon proteolytic domain. Catalysis depends on residues S820 and K863. The Microbody targeting signal motif lies at 927-929 (SRL).

The protein belongs to the peptidase S16 family.

The protein resides in the peroxisome matrix. It carries out the reaction Hydrolysis of proteins in presence of ATP.. Functionally, ATP-dependent serine protease that mediates the selective degradation of misfolded and unassembled polypeptides in the peroxisomal matrix. Necessary for type 2 peroxisome targeting signal (PTS2)-containing protein processing and facilitates peroxisome matrix protein import. The polypeptide is Lon protease homolog 2, peroxisomal (Aspergillus niger (strain ATCC MYA-4892 / CBS 513.88 / FGSC A1513)).